Consider the following 78-residue polypeptide: Large ribosomal subunit protein bL28 (78 aa).

The protein belongs to the bacterial ribosomal protein bL28 family.

The polypeptide is Large ribosomal subunit protein bL28 (Edwardsiella ictaluri (strain 93-146)).